We begin with the raw amino-acid sequence, 235 residues long: Proteasome subunit alpha type-2 (235 aa).

It belongs to the peptidase T1A family. As to quaternary structure, the 26S proteasome consists of a 20S proteasome core and two 19S regulatory subunits. The 20S proteasome core is composed of 28 subunits that are arranged in four stacked rings, resulting in a barrel-shaped structure. The two end rings are each formed by seven alpha subunits, and the two central rings are each formed by seven beta subunits. The catalytic chamber with the active sites is on the inside of the barrel.

The protein resides in the cytoplasm. It is found in the nucleus. Functionally, the proteasome is a multicatalytic proteinase complex which is characterized by its ability to cleave peptides with Arg, Phe, Tyr, Leu, and Glu adjacent to the leaving group at neutral or slightly basic pH. The proteasome has an ATP-dependent proteolytic activity. The sequence is that of Proteasome subunit alpha type-2 (PAB1) from Oryza sativa subsp. indica (Rice).